A 429-amino-acid polypeptide reads, in one-letter code: MSDDKFDAIVVGAGVAGSVAALVMARAGLDVLVIERGDSAGCKNMTGGRLYAHTLEAIIPGFAVSAPVERKVTREKISFLTEESAVTLDFHREQPDVPQHASYTVLRNRLDPWLMEQAEQAGAQFIPGVRVDALVREGNKVTGVQAGDDILEANVVILADGVNSMLGRSLGMVPASDPHHYAVGVKEVIGLTPEQINDRFNITGEEGAAWLFAGSPSDGLMGGGFLYTNKDSISLGLVCGLGDIAHAQKSVPQMLEDFKQHPAIRPLISGGKLLEYSAHMVPEGGLAMVPQLVNEGVMIVGDAAGFCLNLGFTVRGMDLAIASAQAAATTVIAAKERADFSASSLAQYKRELEQSCVMRDMQHFRKIPALMENPRLFSQYPRMVADIMNEMFTIDGKPNQPVRKMIMGHAKKIGLINLLKDGIKGATAL.

8 to 22 (AIVVGAGVAGSVAAL) lines the FAD pocket.

This sequence belongs to the ETF-QO/FixC family. Requires FAD as cofactor.

Functionally, probably accepts electrons from YdiQ/YdiR and reduces a quinone. This is Probable electron transfer flavoprotein-quinone oxidoreductase YdiS (ydiS) from Escherichia coli (strain K12).